Here is a 465-residue protein sequence, read N- to C-terminus: Midnolin (465 aa).

The Ubiquitin-like domain occupies 32–106 (MSLAIHSTTG…LTLVPTVEAG (75 aa)). 2 disordered regions span residues 185–262 (SVAT…SRKP) and 400–445 (RLRR…GLDF). Low complexity-rich tracts occupy residues 195–219 (RPVS…PSPV) and 240–257 (SPPA…SPTP). The required for nucleolar localization stretch occupies residues 397–424 (QQKRLRRKARRDARGPYHWTPSRKAGRS).

In terms of assembly, interacts with GCK; the interaction occurs preferentially at low glucose levels. Interacts with the proteasome. As to expression, expressed at high levels in brain and liver with significantly lower levels in muscle.

The protein resides in the nucleus. The protein localises to the cytoplasm. It is found in the cytosol. Its subcellular location is the nucleolus. Facilitates the ubiquitin-independent proteasomal degradation of stimulus-induced transcription factors such as FOSB, EGR1, NR4A1, and IRF4 to the proteasome for degradation. Promotes also the degradation of other substrates such as CBX4. Plays a role in inhibiting the activity of glucokinase GCK and both glucose-induced and basal insulin secretion. The sequence is that of Midnolin (Midn) from Mus musculus (Mouse).